Reading from the N-terminus, the 269-residue chain is Putative phosphatase M6_Spy0533 (269 aa).

Catalysis depends on Asp-9, which acts as the Nucleophile. Mg(2+) is bound at residue Asp-9. Ile-10 provides a ligand contact to phosphate. Residue Asp-11 coordinates Mg(2+). Phosphate contacts are provided by residues 43-44 and Lys-196; that span reads TG. Residue Asp-219 coordinates Mg(2+). Asn-222 serves as a coordination point for phosphate.

It depends on Mg(2+) as a cofactor.

This Streptococcus pyogenes serotype M6 (strain ATCC BAA-946 / MGAS10394) protein is Putative phosphatase M6_Spy0533.